The sequence spans 966 residues: Dynamin-like GTPase OPA1, mitochondrial (966 aa).

A mitochondrion-targeting transit peptide spans 1–86 (MLRAGSVVTC…GGHGYQQHRT (86 aa)). The Mitochondrial matrix segment spans residues 87 to 95 (FWVARLAAR). The chain crosses the membrane as a helical span at residues 96 to 112 (LLKLRYILLGSAVGGGY). The Mitochondrial intermembrane segment spans residues 113-776 (TAKKTYDEWK…SVIADMVGPD (664 aa)). The disordered stretch occupies residues 189-217 (ESALRAPDVPPASAAMADSGDKQFKKSSD). The segment covering 207-217 (SGDKQFKKSSD) has biased composition (basic and acidic residues). Residues 213–259 (KKSSDKEKVDQLQEELLRTQLKYQRMLERLEKENKELRKVVLQKDDK) adopt a coiled-coil conformation. In terms of domain architecture, Dynamin-type G spans 291–567 (QDHLPRVVVV…FWKMVRESVE (277 aa)). The segment at 301 to 308 (GDQSAGKT) is G1 motif. Ser304, Gly306, Lys307, Thr308, Ser309, and Gly323 together coordinate GTP. Residue Thr308 participates in Mg(2+) binding. The tract at residues 327-330 (MMTR) is G2 motif. The Mg(2+) site is built by Thr329 and Asp404. Residues 404–407 (DLPG) form a G3 motif region. Residues 473 to 476 (TKVD) are G4 motif. GTP-binding residues include Lys474, Asp476, and Thr509. The interval 507–510 (VVTG) is G5 motif. Stalk region regions lie at residues 595-842 (DRNE…IKDT) and 880-934 (CNDV…VQLI). Residues 742 to 862 (TDKPQWDAAI…QKALLHCNLC (121 aa)) are paddle region. The stretch at 777–787 (WKQRWMSWKNR) is an intramembrane region. Residues 788 to 966 (TPEQHTRNET…AFIEALHKEK (179 aa)) lie on the Mitochondrial intermembrane side of the membrane. Cys862 and Cys880 are disulfide-bonded. Residues 901–966 (RQQLTNTEVR…AFIEALHKEK (66 aa)) adopt a coiled-coil conformation.

It belongs to the TRAFAC class dynamin-like GTPase superfamily. Dynamin/Fzo/YdjA family. In terms of assembly, oligomeric complex consisting of membrane-bound and soluble forms of OPA1. Cleaved by OMA1 or YME1L downstream of the transmembrane region in response to different signals to generate soluble forms. Cleaved by OMA1 at position S1 following stress conditions, generating the short soluble form (Dynamin-like GTPase OPA1, short form; S-OPA1).

The protein localises to the mitochondrion inner membrane. Its subcellular location is the mitochondrion intermembrane space. It catalyses the reaction GTP + H2O = GDP + phosphate + H(+). Functionally, dynamin-related GTPase that is essential for normal mitochondrial morphology by mediating fusion of the mitochondrial inner membranes, regulating cristae morphology and maintaining respiratory chain function. Exists in two forms: the transmembrane, long form (Dynamin-like GTPase OPA1, long form; L-OPA1), which is tethered to the inner mitochondrial membrane, and the short soluble form (Dynamin-like GTPase OPA1, short form; S-OPA1), which results from proteolytic cleavage and localizes in the intermembrane space. Both forms (L-OPA1 and S-OPA1) cooperate to catalyze the fusion of the mitochondrial inner membrane. The equilibrium between L-OPA1 and S-OPA1 is essential: excess levels of S-OPA1, produced by cleavage by OMA1 following loss of mitochondrial membrane potential, lead to an impaired equilibrium between L-OPA1 and S-OPA1, inhibiting mitochondrial fusion. The balance between L-OPA1 and S-OPA1 also influences cristae shape and morphology. Its role in mitochondrial morphology is required for mitochondrial genome maintenance. Its function is as follows. Constitutes the transmembrane long form (L-OPA1) that plays a central role in mitochondrial inner membrane fusion and cristae morphology. L-OPA1 and the soluble short form (S-OPA1) form higher-order helical assemblies that coordinate the fusion of mitochondrial inner membranes. Inner membrane-anchored L-OPA1 molecules initiate membrane remodeling by recruiting soluble S-OPA1 to rapidly polymerize into a flexible cylindrical scaffold encaging the mitochondrial inner membrane. Once at the membrane surface, the formation of S-OPA1 helices induce bilayer curvature. OPA1 dimerization through the paddle region, which inserts into cardiolipin-containing membrane, promotes GTP hydrolysis and the helical assembly of a flexible OPA1 lattice on the membrane, which drives membrane curvature and mitochondrial fusion. Plays a role in the maintenance and remodeling of mitochondrial cristae, some invaginations of the mitochondrial inner membrane that provide an increase in the surface area. Probably acts by forming helical filaments at the inside of inner membrane tubes with the shape and dimensions of crista junctions. In terms of biological role, constitutes the soluble short form (S-OPA1) generated by cleavage by OMA1, which plays a central role in mitochondrial inner membrane fusion and cristae morphology. The transmembrane long form (L-OPA1) and the S-OPA1 form higher-order helical assemblies that coordinate the fusion of mitochondrial inner membranes. Inner membrane-anchored L-OPA1 molecules initiate membrane remodeling by recruiting soluble S-OPA1 to rapidly polymerize into a flexible cylindrical scaffold encaging the mitochondrial inner membrane. Once at the membrane surface, the formation of S-OPA1 helices induce bilayer curvature. OPA1 dimerization through the paddle region, which inserts into cardiolipin-containing membrane, promotes GTP hydrolysis and the helical assembly of a flexible OPA1 lattice on the membrane, which drives membrane curvature and mitochondrial fusion. Excess levels of S-OPA1 produced by cleavage by OMA1 following stress conditions that induce loss of mitochondrial membrane potential, lead to an impaired equilibrium between L-OPA1 and S-OPA1, thereby inhibiting mitochondrial fusion. Plays a role in the maintenance and remodeling of mitochondrial cristae, some invaginations of the mitochondrial inner membrane that provide an increase in the surface area. Probably acts by forming helical filaments at the inside of inner membrane tubes with the shape and dimensions of crista junctions. The chain is Dynamin-like GTPase OPA1, mitochondrial from Danio rerio (Zebrafish).